The sequence spans 502 residues: ATP synthase subunit alpha (502 aa).

The segment at 115 to 135 (VDGLGPINTTNTRPIESPAPG) is disordered. Residue 169–176 (GDRQTGKT) coordinates ATP.

This sequence belongs to the ATPase alpha/beta chains family. F-type ATPases have 2 components, CF(1) - the catalytic core - and CF(0) - the membrane proton channel. CF(1) has five subunits: alpha(3), beta(3), gamma(1), delta(1), epsilon(1). CF(0) has three main subunits: a(1), b(2) and c(9-12). The alpha and beta chains form an alternating ring which encloses part of the gamma chain. CF(1) is attached to CF(0) by a central stalk formed by the gamma and epsilon chains, while a peripheral stalk is formed by the delta and b chains.

It is found in the cell membrane. It carries out the reaction ATP + H2O + 4 H(+)(in) = ADP + phosphate + 5 H(+)(out). Functionally, produces ATP from ADP in the presence of a proton gradient across the membrane. The alpha chain is a regulatory subunit. In Bacillus mycoides (strain KBAB4) (Bacillus weihenstephanensis), this protein is ATP synthase subunit alpha.